A 475-amino-acid polypeptide reads, in one-letter code: AAA-ATPase At1g43910 (475 aa).

Residues 11-28 traverse the membrane as a helical segment; it reads VSAVFSLYTSFSAITMLF. T85 carries the post-translational modification Phosphothreonine. Position 246-253 (246-253) interacts with ATP; the sequence is GPPGTGKS. Disordered stretches follow at residues 306–328 and 453–475; these read SRRR…PQKR and KGED…EAET. Residues 457 to 467 show a composition bias toward acidic residues; that stretch reads SSVEEEGEIED.

This sequence belongs to the AAA ATPase family. BCS1 subfamily. Mg(2+) serves as cofactor. Expressed in developing shoots.

It is found in the membrane. The catalysed reaction is ATP + H2O = ADP + phosphate + H(+). The polypeptide is AAA-ATPase At1g43910 (Arabidopsis thaliana (Mouse-ear cress)).